Consider the following 274-residue polypeptide: Serine protease 28 (274 aa).

A signal peptide spans 1–26 (MFRLLLLALSCLESTVFMASVSISRS). The 244-residue stretch at 31 to 274 (IVGGQRTPPG…SLAWIHQHIQ (244 aa)) folds into the Peptidase S1 domain. An intrachain disulfide couples Cys-62 to Cys-78. His-77 acts as the Charge relay system in catalysis. An N-linked (GlcNAc...) asparagine glycan is attached at Asn-106. Catalysis depends on Asp-124, which acts as the Charge relay system. 3 cysteine pairs are disulfide-bonded: Cys-158–Cys-233, Cys-191–Cys-214, and Cys-223–Cys-251. Ser-227 serves as the catalytic Charge relay system.

It belongs to the peptidase S1 family. In terms of assembly, homooligomer, heterodimer and heterotetramer. Able to form homo- and hetero- tetrameric structures. Heterotetramer is far more stable than the homotetramer. In terms of tissue distribution, expressed in embryos throughout the preimplantation period, during blastocyst hatching and embryo outgrowth. Found in uterus especially in glandular epithelium.

Its subcellular location is the secreted. Inhibited by benzamidine, (4-amidino-phenyl)-methane-sulfonyl (APMSF), N-p-tosyl-L-lysine chloromethylketone (TLCK), gabexate, mesylate, BABIM and trypsin soybean inhibitor (TSI). In terms of biological role, involved in embryo hatching and implantation. This chain is Serine protease 28 (Prss28), found in Mus musculus (Mouse).